The chain runs to 201 residues: ATP-dependent Clp protease proteolytic subunit (201 aa).

The active-site Nucleophile is the serine 105. Histidine 130 is a catalytic residue.

It belongs to the peptidase S14 family. In terms of assembly, fourteen ClpP subunits assemble into 2 heptameric rings which stack back to back to give a disk-like structure with a central cavity, resembling the structure of eukaryotic proteasomes.

It localises to the cytoplasm. The catalysed reaction is Hydrolysis of proteins to small peptides in the presence of ATP and magnesium. alpha-casein is the usual test substrate. In the absence of ATP, only oligopeptides shorter than five residues are hydrolyzed (such as succinyl-Leu-Tyr-|-NHMec, and Leu-Tyr-Leu-|-Tyr-Trp, in which cleavage of the -Tyr-|-Leu- and -Tyr-|-Trp bonds also occurs).. In terms of biological role, cleaves peptides in various proteins in a process that requires ATP hydrolysis. Has a chymotrypsin-like activity. Plays a major role in the degradation of misfolded proteins. In Acinetobacter baylyi (strain ATCC 33305 / BD413 / ADP1), this protein is ATP-dependent Clp protease proteolytic subunit.